A 182-amino-acid polypeptide reads, in one-letter code: Large ribosomal subunit protein uL10 (182 aa).

Belongs to the universal ribosomal protein uL10 family. As to quaternary structure, part of the ribosomal stalk of the 50S ribosomal subunit. The N-terminus interacts with L11 and the large rRNA to form the base of the stalk. The C-terminus forms an elongated spine to which L12 dimers bind in a sequential fashion forming a multimeric L10(L12)X complex.

Its function is as follows. Forms part of the ribosomal stalk, playing a central role in the interaction of the ribosome with GTP-bound translation factors. This chain is Large ribosomal subunit protein uL10, found in Leptothrix cholodnii (strain ATCC 51168 / LMG 8142 / SP-6) (Leptothrix discophora (strain SP-6)).